Here is a 428-residue protein sequence, read N- to C-terminus: Aspartate--tRNA(Asp) ligase (428 aa).

An L-aspartate-binding site is contributed by Glu-170. Residues 192-195 (QLYK) are aspartate. Arg-213 lines the L-aspartate pocket. Residues 213–215 (RAE) and Glu-351 contribute to the ATP site. Mg(2+) is bound by residues Glu-351 and Ser-354. The L-aspartate site is built by Ser-354 and Arg-358. 399 to 402 (GFNR) is a binding site for ATP.

This sequence belongs to the class-II aminoacyl-tRNA synthetase family. Type 2 subfamily. Homodimer. It depends on Mg(2+) as a cofactor.

Its subcellular location is the cytoplasm. It carries out the reaction tRNA(Asp) + L-aspartate + ATP = L-aspartyl-tRNA(Asp) + AMP + diphosphate. In terms of biological role, catalyzes the attachment of L-aspartate to tRNA(Asp) in a two-step reaction: L-aspartate is first activated by ATP to form Asp-AMP and then transferred to the acceptor end of tRNA(Asp). The polypeptide is Aspartate--tRNA(Asp) ligase (Pyrobaculum aerophilum (strain ATCC 51768 / DSM 7523 / JCM 9630 / CIP 104966 / NBRC 100827 / IM2)).